The chain runs to 239 residues: Purine nucleoside phosphorylase DeoD-type (239 aa).

Residue His-5 coordinates a purine D-ribonucleoside. Phosphate contacts are provided by residues Gly-21, Arg-25, Arg-44, and 88–91 (RVGS). A purine D-ribonucleoside contacts are provided by residues 180 to 182 (EME) and 204 to 205 (SD). The active-site Proton donor is the Asp-205.

The protein belongs to the PNP/UDP phosphorylase family. In terms of assembly, homohexamer; trimer of homodimers.

The catalysed reaction is a purine D-ribonucleoside + phosphate = a purine nucleobase + alpha-D-ribose 1-phosphate. It catalyses the reaction a purine 2'-deoxy-D-ribonucleoside + phosphate = a purine nucleobase + 2-deoxy-alpha-D-ribose 1-phosphate. Catalyzes the reversible phosphorolytic breakdown of the N-glycosidic bond in the beta-(deoxy)ribonucleoside molecules, with the formation of the corresponding free purine bases and pentose-1-phosphate. The protein is Purine nucleoside phosphorylase DeoD-type of Yersinia pseudotuberculosis serotype O:1b (strain IP 31758).